We begin with the raw amino-acid sequence, 122 residues long: MARIAGVNIPTAKRVVIALTYIHGIGTKFAQEIVEKVGIPAERRVHQLTDAEVLQIRETIDRDYQVEGDLRRETSMNIKRLMDLGCYRGLRHRRGLPVRGQRTHTNARTRKGPAKAIAGKKK.

The disordered stretch occupies residues 99-122 (RGQRTHTNARTRKGPAKAIAGKKK).

It belongs to the universal ribosomal protein uS13 family. Part of the 30S ribosomal subunit. Forms a loose heterodimer with protein S19. Forms two bridges to the 50S subunit in the 70S ribosome.

Functionally, located at the top of the head of the 30S subunit, it contacts several helices of the 16S rRNA. In the 70S ribosome it contacts the 23S rRNA (bridge B1a) and protein L5 of the 50S subunit (bridge B1b), connecting the 2 subunits; these bridges are implicated in subunit movement. Contacts the tRNAs in the A and P-sites. In Sinorhizobium medicae (strain WSM419) (Ensifer medicae), this protein is Small ribosomal subunit protein uS13.